The chain runs to 259 residues: UPF0246 protein VF_2109 (259 aa).

It belongs to the UPF0246 family.

This chain is UPF0246 protein VF_2109, found in Aliivibrio fischeri (strain ATCC 700601 / ES114) (Vibrio fischeri).